Consider the following 552-residue polypeptide: FERRY endosomal RAB5 effector complex subunit 3 (552 aa).

Ser79 bears the Phosphoserine mark.

Component of the FERRY complex composed of five subunits, TBCK, PPP1R21, FERRY3, CRYZL1 and GATD1 with a ratio of 1:2:1:2:4, respectively.

It is found in the cytoplasm. Its subcellular location is the early endosome. Component of the FERRY complex (Five-subunit Endosomal Rab5 and RNA/ribosome intermediary). The FERRY complex directly interacts with mRNAs and RAB5A, and functions as a RAB5A effector involved in the localization and the distribution of specific mRNAs most likely by mediating their endosomal transport. The complex recruits mRNAs and ribosomes to early endosomes through direct mRNA-interaction. Plays a role in mast cell degranulation. In Rattus norvegicus (Rat), this protein is FERRY endosomal RAB5 effector complex subunit 3.